Consider the following 1214-residue polypeptide: Sodium bicarbonate cotransporter 3 (1214 aa).

Residues 1-12 (MERFRLEKKLPG) are compositionally biased toward basic and acidic residues. Disordered regions lie at residues 1-22 (MERF…VDLG) and 52-93 (SKES…PSQR). At 1–608 (MERFRLEKKL…DFKDALSLQC (608 aa)) the chain is on the extracellular side. Residues Ser52, Ser55, Ser84, Ser150, Leu165, and Cys168 each carry the phosphoserine modification. Basic residues predominate over residues 55 to 72 (SRRRHRHRGHKHHHRRRK). Positions 73–85 (DKESDKEDGRESP) are enriched in basic and acidic residues. An N-linked (GlcNAc...) asparagine glycan is attached at Asn171. A phosphoserine mark is found at Ser233, Ser242, Ser255, Arg258, Ser260, Thr263, Gly264, and Ala267. An N-linked (GlcNAc...) asparagine glycan is attached at Asn269. Disordered stretches follow at residues 289 to 346 (SRAG…IPTV), 362 to 408 (EEQK…ENST), and 552 to 572 (FHNG…HHAG). A compositionally biased stretch (pro residues) spans 303–313 (VPTPQNSPPSS). Low complexity predominate over residues 314-332 (PSISRLTSRSSQESQRQAP). Over residues 379 to 392 (SPQSAPGNLDNSKS) the composition is skewed to polar residues. Position 382 is a phosphoserine (Ser382). N-linked (GlcNAc...) asparagine glycosylation occurs at Asn398. Phosphoserine occurs at positions 400 and 403. A glycan (N-linked (GlcNAc...) asparagine) is linked at Asn406. Residues Ser407 and Ser556 each carry the phosphoserine modification. Thr557 bears the Phosphothreonine mark. A compositionally biased stretch (basic and acidic residues) spans 563–572 (TPKEAAHHAG). A helical transmembrane segment spans residues 609–629 (LASILFLYCACMSPVITFGGL). Over 630–637 (LGEATEGR) the chain is Cytoplasmic. A helical membrane pass occupies residues 638–658 (ISAIESLFGASLTGIAYSLFA). At 659–695 (GQPLTILGSTGPVLVFEKILYKFCRDYQLSYLSLRTS) the chain is on the extracellular side. Residues 696 to 716 (IGLWTSFLCIVLVATDASSLV) form a helical membrane-spanning segment. Residues 717–725 (CYITRFTEE) are Cytoplasmic-facing. Residues 726-746 (AFAALICIIFIYEALEKLFDL) form a helical membrane-spanning segment. Lys742 carries the phosphoserine modification. The Extracellular segment spans residues 747 to 817 (GETYAFNMHN…VFLGSACGHH (71 aa)). The cysteines at positions 766 and 768 are disulfide-linked. Phosphoserine is present on residues Pro771 and Pro774. Asn776 carries an N-linked (GlcNAc...) asparagine glycan. Ala780 is subject to Phosphoserine. Asn786 and Asn791 each carry an N-linked (GlcNAc...) asparagine glycan. A disulfide bond links Cys802 and Cys814. Residues 818 to 838 (GPYIPDVLFWCVILFFTTFFL) form a helical membrane-spanning segment. Residues 839–861 (SSFLKQFKTKRYFPTKVRSTISD) are Cytoplasmic-facing. Residues 862–882 (FAVFLTIVIMVTIDYLVGVPS) form a helical membrane-spanning segment. At 883-908 (PKLHVPEKFEPTHPERGWIISPLGDN) the chain is on the extracellular side. Residues 909 to 929 (PWWTLLIAAIPALLCTILIFM) traverse the membrane as a helical segment. The Cytoplasmic segment spans residues 930–954 (DQQITAVIINRKEHKLKKGAGYHLD). Residues 955 to 975 (LLMVGVMLGVCSVMGLPWFVA) traverse the membrane as a helical segment. The Extracellular portion of the chain corresponds to 976–1011 (ATVLSISHVNSLKVESECSAPGEQPKFLGIREQRVT). 3 positions are modified to phosphoserine: Glu1007, Val1010, and Phe1016. 2 essential for cell membrane localization and transport activity regions span residues 1008 to 1131 (QRVT…KREL) and 1127 to 1214 (TKRE…ETSL). Residues 1012-1032 (GLMIFILMGLSVFMTSVLKFI) form a helical membrane-spanning segment. At 1033–1034 (PM) the chain is on the cytoplasmic side. A helical transmembrane segment spans residues 1035-1055 (PVLYGVFLYMGVSSLKGIQLF). At 1056 to 1092 (DRIKLFGMPAKHQPDLIYLRYVPLWKVHIFTVIQLTC) the chain is on the extracellular side. Tyr1073, Val1077, Ser1102, Ala1105, Val1106, Pro1109, Met1111, and Leu1115 each carry phosphoserine. Residues 1093-1113 (LVLLWVIKVSAAAVVFPMMVL) form a helical membrane-spanning segment. Over 1114 to 1214 (ALVFVRKLMD…KKYVDAETSL (101 aa)) the chain is Cytoplasmic. Residues 1134–1136 (LDD) are CA2-binding. Positions 1144–1162 (KKEDDKKKKEKEEAERMLQ) are enriched in basic and acidic residues. A disordered region spans residues 1144–1169 (KKEDDKKKKEKEEAERMLQDDDDTVH). Thr1167 is modified (phosphothreonine). A phosphoserine mark is found at Ser1176, Ser1188, Asp1201, and Ser1213. The PDZ-binding signature appears at 1211 to 1214 (ETSL).

It belongs to the anion exchanger (TC 2.A.31) family. As to quaternary structure, interacts with CFTR through NHERF1/EBP50. Interacts with USH1C. Forms a complex with ATP6V1B1 and NHERF1/EBP50. Interacts in a pH dependent-manner with CA2/carbonic anhydrase 2. In terms of tissue distribution, highly expressed in testis and spleen. Also expressed in retina, colon, small intestine, ovary, thymus, prostate, muscle, heart and kidney. As to expression, expressed in skeletal muscle and heart muscle.

The protein localises to the basolateral cell membrane. Its subcellular location is the apical cell membrane. It localises to the cell projection. The protein resides in the stereocilium. It is found in the cell membrane. It carries out the reaction hydrogencarbonate(in) + Na(+)(in) = hydrogencarbonate(out) + Na(+)(out). Its activity is regulated as follows. Transporter activity is regulated by CA2/carbonic anhydrase 2, cAMP and PKA. Insensitive to stilbene derivatives. Inhibited by 5-(N-ethyl-N-isopropyl)-amiloride (EIPA). Functionally, electroneutral sodium- and bicarbonate-dependent cotransporter with a Na(+):HCO3(-) 1:1 stoichiometry. Mediates the sodium-dependent bicarbonate transport important for pH recovery after acid load as well as for regulation of steady-state pH in the duodenum and vascular smooth muscle cells. Plays a key role in macrophage acidification, mediating bicarbonate import into the cytoplasm which is crucial for net acid extrusion and maintenance of cytoplasmic pH during phagocytosis. Provides cellular bicarbonate for de novo purine and pyrimidine synthesis and is a key mediator of de novo nucleotide synthesis downstream of mTORC1 signaling in proliferating cells. Plays a key role in macrophage acidification, mediating bicarbonate import into the cytoplasm which is crucial for net acid extrusion and maintenance of cytoplasmic pH during phagocytosis. The polypeptide is Sodium bicarbonate cotransporter 3 (SLC4A7) (Homo sapiens (Human)).